Consider the following 376-residue polypeptide: Chaperone protein DnaJ (376 aa).

Residues 5–70 enclose the J domain; that stretch reads DYYEVLGAAK…QKRAAYDQFG (66 aa). The segment at 134 to 212 adopts a CR-type zinc-finger fold; it reads GCDEKIRIPT…CGGQGRVQNT (79 aa). Residues cysteine 147, cysteine 150, cysteine 164, cysteine 167, cysteine 186, cysteine 189, cysteine 200, and cysteine 203 each contribute to the Zn(2+) site. CXXCXGXG motif repeat units follow at residues 147–154, 164–171, 186–193, and 200–207; these read CDVCHGSG, CTTCGGVG, CPTCKGEG, and CGNCGGQG.

Belongs to the DnaJ family. In terms of assembly, homodimer. The cofactor is Zn(2+).

It localises to the cytoplasm. Functionally, participates actively in the response to hyperosmotic and heat shock by preventing the aggregation of stress-denatured proteins and by disaggregating proteins, also in an autonomous, DnaK-independent fashion. Unfolded proteins bind initially to DnaJ; upon interaction with the DnaJ-bound protein, DnaK hydrolyzes its bound ATP, resulting in the formation of a stable complex. GrpE releases ADP from DnaK; ATP binding to DnaK triggers the release of the substrate protein, thus completing the reaction cycle. Several rounds of ATP-dependent interactions between DnaJ, DnaK and GrpE are required for fully efficient folding. Also involved, together with DnaK and GrpE, in the DNA replication of plasmids through activation of initiation proteins. The protein is Chaperone protein DnaJ of Alcanivorax borkumensis (strain ATCC 700651 / DSM 11573 / NCIMB 13689 / SK2).